A 286-amino-acid polypeptide reads, in one-letter code: Peroxisomal membrane protein pex14 (286 aa).

The SH3-binding signature appears at 61–69 (TSNFVSRDW). The stretch at 122–214 (KILENLDEQT…REISSLRCLQ (93 aa)) forms a coiled coil. A disordered region spans residues 218-239 (KKDDTFATTSNSSIPVLENPLD).

Belongs to the peroxin-14 family. In terms of assembly, interacts with PEX13 (via SH3 domain); forming the PEX13-PEX14 docking complex. Interacts with PEX5 (via WxxxF/Y motifs).

It is found in the peroxisome membrane. Its function is as follows. Component of the PEX13-PEX14 docking complex, a translocon channel that specifically mediates the import of peroxisomal cargo proteins bound to PEX5 receptor. The PEX13-PEX14 docking complex forms a large import pore which can be opened to a diameter of about 9 nm. Mechanistically, PEX5 receptor along with cargo proteins associates with the PEX14 subunit of the PEX13-PEX14 docking complex in the cytosol, leading to the insertion of the receptor into the organelle membrane with the concomitant translocation of the cargo into the peroxisome matrix. The sequence is that of Peroxisomal membrane protein pex14 (pex14) from Schizosaccharomyces pombe (strain 972 / ATCC 24843) (Fission yeast).